The following is a 158-amino-acid chain: Regulator of sigma D (158 aa).

This sequence belongs to the Rsd/AlgQ family. Interacts with RpoD.

The protein localises to the cytoplasm. Its function is as follows. Binds RpoD and negatively regulates RpoD-mediated transcription activation by preventing the interaction between the primary sigma factor RpoD with the catalytic core of the RNA polymerase and with promoter DNA. May be involved in replacement of the RNA polymerase sigma subunit from RpoD to RpoS during the transition from exponential growth to the stationary phase. The polypeptide is Regulator of sigma D (Shigella boydii serotype 4 (strain Sb227)).